We begin with the raw amino-acid sequence, 283 residues long: Zinc finger protein 691 (283 aa).

Basic and acidic residues predominate over residues 1–41 (MGSEKEQRPEAHLPEEGEGAKPWRVDGSKDSQITPREDHGQ). Residues 1–68 (MGSEKEQRPE…KVTAQAGGPG (68 aa)) form a disordered region. Phosphoserine is present on S43. K81 participates in a covalent cross-link: Glycyl lysine isopeptide (Lys-Gly) (interchain with G-Cter in SUMO2). 7 consecutive C2H2-type zinc fingers follow at residues 83–105 (FICAQCGKTFNNTSNLRTHQRIH), 111–133 (YKCSECGKSFSRSSNRIRHERIH), 139–161 (YQCAKCQESFRRRSDLTTHQQDH), 167–189 (YRCDICGKSFTQSSTLAVHHRTH), 195–217 (YICCECGKSFSNSSSFGVHHRTH), 223–245 (YECTECGRTFSDISNFGAHQRTH), and 251–273 (YRCTLCGKHFSRSSNLIRHQKTH).

The protein belongs to the krueppel C2H2-type zinc-finger protein family.

It is found in the nucleus. Its function is as follows. May be involved in transcriptional regulation. In Mus musculus (Mouse), this protein is Zinc finger protein 691 (Znf691).